The chain runs to 125 residues: Large ribosomal subunit protein bL12 (125 aa).

It belongs to the bacterial ribosomal protein bL12 family. As to quaternary structure, homodimer. Part of the ribosomal stalk of the 50S ribosomal subunit. Forms a multimeric L10(L12)X complex, where L10 forms an elongated spine to which 2 to 4 L12 dimers bind in a sequential fashion. Binds GTP-bound translation factors.

Forms part of the ribosomal stalk which helps the ribosome interact with GTP-bound translation factors. Is thus essential for accurate translation. In Chlorobium limicola (strain DSM 245 / NBRC 103803 / 6330), this protein is Large ribosomal subunit protein bL12.